The primary structure comprises 468 residues: ATP synthase subunit beta (468 aa).

155 to 162 (GGAGVGKT) is an ATP binding site.

Belongs to the ATPase alpha/beta chains family. In terms of assembly, F-type ATPases have 2 components, CF(1) - the catalytic core - and CF(0) - the membrane proton channel. CF(1) has five subunits: alpha(3), beta(3), gamma(1), delta(1), epsilon(1). CF(0) has three main subunits: a(1), b(2) and c(9-12). The alpha and beta chains form an alternating ring which encloses part of the gamma chain. CF(1) is attached to CF(0) by a central stalk formed by the gamma and epsilon chains, while a peripheral stalk is formed by the delta and b chains.

The protein localises to the cell membrane. The catalysed reaction is ATP + H2O + 4 H(+)(in) = ADP + phosphate + 5 H(+)(out). Produces ATP from ADP in the presence of a proton gradient across the membrane. The catalytic sites are hosted primarily by the beta subunits. The chain is ATP synthase subunit beta from Streptococcus mutans serotype c (strain ATCC 700610 / UA159).